Reading from the N-terminus, the 300-residue chain is uncharacterized protein (300 aa).

The N-terminal stretch at 1–22 (MKSFVWTLLGALSLGSLTTAYG) is a signal peptide.

The protein resides in the endoplasmic reticulum. This is an uncharacterized protein from Schizosaccharomyces pombe (strain 972 / ATCC 24843) (Fission yeast).